Reading from the N-terminus, the 146-residue chain is MAAYLLAVAILFCIQGWPLGTVQGQVMPFMEVYRHSVCQTRETLVSILEEHPDEVSHIFRPSCVTALRCGGCCTDESLKCTATGKRSVGREIMRVDPHKGTSKTEVMQFTEHTDCECRPRSASGVNSRKHKRNPEEGEPRAKFPFV.

A signal peptide spans 1-24 (MAAYLLAVAILFCIQGWPLGTVQG). Glutamine 25 is subject to Pyrrolidone carboxylic acid. Cystine bridges form between cysteine 38-cysteine 80, cysteine 69-cysteine 115, and cysteine 73-cysteine 117. The tract at residues 119–146 (PRSASGVNSRKHKRNPEEGEPRAKFPFV) is disordered. Residues 133-146 (NPEEGEPRAKFPFV) show a composition bias toward basic and acidic residues.

This sequence belongs to the PDGF/VEGF growth factor family. Snake venom VEGF subfamily. In terms of assembly, homodimer; disulfide-linked. Interacts with VEGF receptor-1 (FLT1) with a high affinity, whereas it binds to VEGF receptor-2 (KDR) with a low affinity. Does not bind VEGF receptor-3 (FLT4). As to expression, expressed by the venom gland.

Its subcellular location is the secreted. In terms of biological role, snake venom VEGFs may contribute to venom dispersion and prey subjugation by inducing vascular permeability and hypotension. This protein induces vascular permeability probably through VEGF (VEGFR) signaling. This protein also induces a drastic hypotensive effect after intravenous injection. The hypotension is mediated by nitric oxide (NO), which is produced by VEGF-activated endothelium NO synthase. Also induces angiogenesis in vitro. Like other crotalid VEGFs, this protein interacts with VEGF receptor-1 (FLT1) with a high affinity, whereas it binds to VEGF receptor-2 (KDR) with a low affinity. This Bothrops insularis (Golden lancehead) protein is Snake venom vascular endothelial growth factor toxin.